The chain runs to 299 residues: tRNA dimethylallyltransferase (299 aa).

13-20 (GPTASGKT) is an ATP binding site. 15 to 20 (TASGKT) serves as a coordination point for substrate. The interval 38 to 41 (DSRQ) is interaction with substrate tRNA.

The protein belongs to the IPP transferase family. Monomer. Requires Mg(2+) as cofactor.

It carries out the reaction adenosine(37) in tRNA + dimethylallyl diphosphate = N(6)-dimethylallyladenosine(37) in tRNA + diphosphate. In terms of biological role, catalyzes the transfer of a dimethylallyl group onto the adenine at position 37 in tRNAs that read codons beginning with uridine, leading to the formation of N6-(dimethylallyl)adenosine (i(6)A). In Prochlorococcus marinus (strain NATL2A), this protein is tRNA dimethylallyltransferase.